The sequence spans 308 residues: Ribonuclease HIII (308 aa).

Residues 88-304 (FHCIGSDEAG…RDKAIHLINQ (217 aa)) enclose the RNase H type-2 domain. A divalent metal cation-binding residues include Asp-94, Glu-95, and Asp-199.

This sequence belongs to the RNase HII family. RnhC subfamily. The cofactor is Mn(2+). Mg(2+) is required as a cofactor.

The protein resides in the cytoplasm. The enzyme catalyses Endonucleolytic cleavage to 5'-phosphomonoester.. In terms of biological role, endonuclease that specifically degrades the RNA of RNA-DNA hybrids. The sequence is that of Ribonuclease HIII from Staphylococcus epidermidis (strain ATCC 35984 / DSM 28319 / BCRC 17069 / CCUG 31568 / BM 3577 / RP62A).